Reading from the N-terminus, the 1288-residue chain is Contactin-associated protein-like 3B (1288 aa).

The N-terminal stretch at 1-25 (MASVAWAVLKVLLLLPTQTWSPVGA) is a signal peptide. The disordered stretch occupies residues 23–61 (VGAGNPPDCDSPLASALPRSSFSSSSELSSSHGPGFSRL). Topologically, residues 26–1245 (GNPPDCDSPL…LVNADRRDSA (1220 aa)) are extracellular. Positions 31–177 (CDSPLASALP…IGMRIEVYGC (147 aa)) constitute an F5/8 type C domain. 6 disulfides stabilise this stretch: Cys-31–Cys-177, Cys-332–Cys-364, Cys-513–Cys-545, Cys-551–Cys-562, Cys-556–Cys-571, and Cys-573–Cys-583. Positions 33-59 (SPLASALPRSSFSSSSELSSSHGPGFS) are enriched in low complexity. 2 Laminin G-like domains span residues 183–364 (VVYF…SFSC) and 370–545 (VPVT…IDSC). N-linked (GlcNAc...) asparagine glycosylation occurs at Asn-359. Residues 547–584 (ITDRCLPSYCEHGGECSQSWDTFSCDCLGTGYTGETCH) form the EGF-like 1 domain. One can recognise a Fibrinogen C-terminal domain in the interval 585 to 792 (SSLYEQSCEA…LLCRGDKSFW (208 aa)). An N-linked (GlcNAc...) asparagine glycan is attached at Asn-706. The Laminin G-like 3 domain occupies 793-958 (NSASFNTETS…TVTPGVEPGC (166 aa)). 5 cysteine pairs are disulfide-bonded: Cys-931-Cys-958, Cys-962-Cys-975, Cys-969-Cys-984, Cys-986-Cys-996, and Cys-1167-Cys-1203. In terms of domain architecture, EGF-like 2 spans 959-997 (AGHCSTYGHLCRNGGRCREKRRGVTCDCAFSAYDGPFCS). One can recognise a Laminin G-like 4 domain in the interval 1016 to 1203 (EHYTLSENSS…RGHVAPMARC (188 aa)). Positions 1215–1236 (ELAPRLAGGAGRSGPVDEGEPL) are disordered. A helical transmembrane segment spans residues 1246–1266 (VIGGVIAVEIFILLCITAIAI). Topologically, residues 1267–1288 (RIYQQRKLRKENESKVSKKEEC) are cytoplasmic.

This sequence belongs to the neurexin family.

It localises to the membrane. The chain is Contactin-associated protein-like 3B (CNTNAP3B) from Homo sapiens (Human).